A 390-amino-acid polypeptide reads, in one-letter code: Probable purine permease 18 (390 aa).

The segment covering 1–14 has biased composition (polar residues); the sequence is MEMTEASKQTTAEG. The interval 1–23 is disordered; that stretch reads MEMTEASKQTTAEGSANPEPDQI. Ser25 is modified (phosphoserine). Transmembrane regions (helical) follow at residues 39–59, 81–101, 120–140, 148–168, 176–196, 211–231, 250–270, 297–317, 324–344, and 348–368; these read ISVS…MLLL, WLQA…FFIF, LILL…LFAL, GVFT…AAII, WIIL…PEFG, WLTF…QLCF, VIEM…VGLF, IGLA…VLYV, VVHM…FDFM, and FSWP…SYFY.

It belongs to the purine permeases (TC 2.A.7.14) family.

Its subcellular location is the membrane. The polypeptide is Probable purine permease 18 (PUP18) (Arabidopsis thaliana (Mouse-ear cress)).